Here is a 379-residue protein sequence, read N- to C-terminus: Putative zinc metalloprotease BR1156/BS1330_I1152 (379 aa).

Zn(2+) is bound at residue histidine 33. Glutamate 34 is a catalytic residue. Position 37 (histidine 37) interacts with Zn(2+). 4 helical membrane-spanning segments follow: residues 39-61 (LVARWCGIGAQAFSIGFGPELLG), 122-144 (VFAGPAFNIILTIAIFSVFFALY), 305-327 (FDWLIQLMAMLSIGIGLLNLFPL), and 355-377 (IFYRIGFLLVMGFMGFVLFNDLF). One can recognise a PDZ domain in the interval 133–208 (TIAIFSVFFA…LNFTVERDGK (76 aa)).

This sequence belongs to the peptidase M50B family. Zn(2+) serves as cofactor.

Its subcellular location is the cell inner membrane. In Brucella suis biovar 1 (strain 1330), this protein is Putative zinc metalloprotease BR1156/BS1330_I1152.